Consider the following 504-residue polypeptide: Fumitremorgin C monooxygenase (504 aa).

Residues 12 to 32 (LGVVGASLIVILGIILLFPLG) traverse the membrane as a helical segment. Cys-442 contributes to the heme binding site.

Belongs to the cytochrome P450 family. The cofactor is heme.

It is found in the membrane. The enzyme catalyses fumitremorgin C + 2 reduced [NADPH--hemoprotein reductase] + 2 O2 = 12alpha,13alpha-dihydroxyfumitremorgin C + 2 oxidized [NADPH--hemoprotein reductase] + 2 H2O + 2 H(+). The protein operates within mycotoxin biosynthesis. Its function is as follows. Cytochrome P450 monooxygenase; part of the gene cluster that mediates the biosynthesis of fumitremorgins, indole alkaloids that carry not only intriguing chemical structures, but also interesting biological and pharmacological activities. The biosynthesis of fumitremorgin-type alkaloids begins by condensation of the two amino acids L-tryptophan and L-proline to brevianamide F, catalyzed by the non-ribosomal peptide synthetase ftmA. Brevianamide F is then prenylated by the prenyltransferase ftmPT1/ftmB in the presence of dimethylallyl diphosphate, resulting in the formation of tryprostatin B. The three cytochrome P450 monooxygenases, ftmP450-1/ftmC, ftmP450-2/ftmE and ftmP450-3/FtmG, are responsible for the conversion of tryprostatin B to 6-hydroxytryprostatin B, tryprostatin A to fumitremorgin C and fumitremorgin C to 12,13-dihydroxyfumitremorgin C, respectively. The putative methyltransferase ftmMT/ftmD is expected for the conversion of 6-hydroxytryprostatin B to tryprostatin A. FtmPT2/FtmH catalyzes the prenylation of 12,13-dihydroxyfumitre-morgin C in the presence of dimethylallyl diphosphate, resulting in the formation of fumitremorgin B. Fumitremorgin B is further converted to verruculogen by ftmOx1/ftmF via the insertion of an endoperoxide bond between the two prenyl moieties. In some fungal species, verruculogen is further converted to fumitremorgin A, but the enzymes involved in this step have not been identified yet. The polypeptide is Fumitremorgin C monooxygenase (Aspergillus fumigatus (Neosartorya fumigata)).